Here is an 89-residue protein sequence, read N- to C-terminus: MVDGRPMQITLNLPDRLNQIGEFDQNDWLREIAIALFEQEHISLARASKISSMEIMEFQKLLSDRGICIHYDVEELAQDIQHLQNRSWL.

It belongs to the UPF0175 family.

This Synechocystis sp. (strain ATCC 27184 / PCC 6803 / Kazusa) protein is UPF0175 protein ssl1255.